Consider the following 719-residue polypeptide: Polyribonucleotide nucleotidyltransferase (719 aa).

Residues Asp495 and Asp501 each contribute to the Mg(2+) site. One can recognise a KH domain in the interval 562-621; it reads PRRLSFRIDPELIGTVIGPGGRTIKGITERTNTKIDIEDTGIVTVASHDGAAAEEAQKII. Residues 631 to 699 enclose the S1 motif domain; that stretch reads GEYFDGKVTR…NRGRINLTLR (69 aa). Positions 699–719 are disordered; that stretch reads RGVPQDGSDPQPTVILPIGES.

It belongs to the polyribonucleotide nucleotidyltransferase family. Mg(2+) serves as cofactor.

The protein localises to the cytoplasm. The enzyme catalyses RNA(n+1) + phosphate = RNA(n) + a ribonucleoside 5'-diphosphate. Involved in mRNA degradation. Catalyzes the phosphorolysis of single-stranded polyribonucleotides processively in the 3'- to 5'-direction. In Synechococcus sp. (strain RCC307), this protein is Polyribonucleotide nucleotidyltransferase.